A 325-amino-acid polypeptide reads, in one-letter code: MSWLTPDLIDILLSILKAVVILLVVVTCGAFMSFGERRLLGLFQNRYGPNRVGWGGSLQLVADMIKMFFKEDWIPRFSDRVIFTLAPVIAFTSLLLAFAIVPVSPTWVVADLNIGILFFLMMAGLAVYAVLFAGWSSNNKYSLLGAMRASAQTLSYEVFLGLSLMGVVAQAGSFNMTDIVNNQAHLWNVIPQFFGFVTFAIAGVAVCHRHPFDQPEAEQELADGYHIEYSGMKFGLFFVGEYIGIVTVSALIVTLFFGGWNGPWLPPFIWFALKTAFFMMMFILIRASLPRPRYDQVMSFGWKVCLPLTLVNLLVTAAVILWQAQ.

8 helical membrane-spanning segments follow: residues 11 to 31 (ILLS…CGAF), 81 to 101 (VIFT…FAIV), 114 to 134 (IGIL…LFAG), 154 to 174 (LSYE…AGSF), 186 to 206 (LWNV…GVAV), 237 to 257 (FFVG…TLFF), 265 to 285 (LPPF…FILI), and 304 to 324 (VCLP…LWQA).

The protein belongs to the complex I subunit 1 family. NDH-1 is composed of 13 different subunits. Subunits NuoA, H, J, K, L, M, N constitute the membrane sector of the complex.

It is found in the cell inner membrane. It carries out the reaction a quinone + NADH + 5 H(+)(in) = a quinol + NAD(+) + 4 H(+)(out). NDH-1 shuttles electrons from NADH, via FMN and iron-sulfur (Fe-S) centers, to quinones in the respiratory chain. The immediate electron acceptor for the enzyme in this species is believed to be ubiquinone. Couples the redox reaction to proton translocation (for every two electrons transferred, four hydrogen ions are translocated across the cytoplasmic membrane), and thus conserves the redox energy in a proton gradient. This subunit may bind ubiquinone. The sequence is that of NADH-quinone oxidoreductase subunit H from Klebsiella pneumoniae (strain 342).